Here is a 75-residue protein sequence, read N- to C-terminus: Antimicrobial peptide ctriporin (75 aa).

A signal peptide spans 1–22; it reads MDSKYLFVFLIFNVIVIDLCQG. Lysine amide is present on lysine 41. Positions 47-75 are excised as a propeptide; it reads ELGSQYDYLQDFRKRELDLDDLLSKFPDY.

Belongs to the non-disulfide-bridged peptide (NDBP) superfamily. Short antimicrobial peptide (group 4) family. Expressed by the venom gland.

It is found in the secreted. The protein localises to the target cell membrane. Its function is as follows. Antimicrobial peptide that acts by breaking the cell wall. Is active against Gram-positive bacteria, fungi and antibiotic-resistant pathogens: S.aureus (MIC=5 ug/ml), M.luteus (MIC=5 ug/ml), B.thuringiensis (MIC=10 ug/ml), B.subtilis (MIC=10 ug/ml), C.albicans (MIC=20 ug/ml), methicillin-resistant S.aureus (MIC=5-10 ug/ml), and penicillin-resistant S.epidermidis (MIC=10 ug/ml). Also shows potent activity against antibiotic-sensitive and -resistant Acinetobacter baumannii (MIC=10-20 uM). Shows cytolytic activity against human erythrocytes. In vivo, is efficient in curing staphylococcal skin infection in mice, when externally applied. This Chaerilus tricostatus (Scorpion) protein is Antimicrobial peptide ctriporin.